We begin with the raw amino-acid sequence, 1129 residues long: Large proline-rich protein bag6 (1129 aa).

The 76-residue stretch at 1–76 (MEVTVKTLDS…HLVERAPPQT (76 aa)) folds into the Ubiquitin-like domain. 8 disordered regions span residues 69–108 (VERA…PERN), 187–235 (QPVN…SPSE), 347–402 (TGNG…HPHP), 490–518 (PAAP…VPGA), 550–606 (GSNT…QHLS), 654–692 (VPVS…ESLP), 942–967 (VPQA…NGAA), and 987–1009 (VPTI…QWAA). Residues 73 to 105 (PPQTQPSTGGPSTSSSTSPSSSNAANVPGAGAP) are compositionally biased toward low complexity. Polar residues-rich tracts occupy residues 209-232 (RETL…SHPS) and 364-383 (HTPT…QPPS). 2 stretches are compositionally biased toward low complexity: residues 553-593 (TPSS…SSGP) and 655-666 (PVSTSPPQSASQ). Residues 667–686 (APPPSSPSPPPAHSSPPPAA) show a composition bias toward pro residues. Residues 947-956 (EASSQDQPME) are compositionally biased toward polar residues.

In terms of assembly, component of the bag6/bat3 complex.

It localises to the cytoplasm. It is found in the cytosol. Its subcellular location is the nucleus. The protein localises to the secreted. The protein resides in the extracellular exosome. Functionally, ATP-independent molecular chaperone preventing the aggregation of misfolded and hydrophobic patches-containing proteins. Functions as part of a cytosolic protein quality control complex, the bag6/bat3 complex, which maintains these client proteins in a soluble state and participates in their proper delivery to the endoplasmic reticulum or alternatively can promote their sorting to the proteasome where they undergo degradation. The bag6/bat3 complex is involved in the post-translational delivery of tail-anchored/type II transmembrane proteins to the endoplasmic reticulum membrane. Similarly, the bag6/bat3 complex also functions as a sorting platform for proteins of the secretory pathway that are mislocalized to the cytosol either delivering them to the proteasome for degradation or to the endoplasmic reticulum. The bag6/bat3 complex also plays a role in the endoplasmic reticulum-associated degradation (ERAD), a quality control mechanism that eliminates unwanted proteins of the endoplasmic reticulum through their retrotranslocation to the cytosol and their targeting to the proteasome. It maintains these retrotranslocated proteins in an unfolded yet soluble state condition in the cytosol to ensure their proper delivery to the proteasome. Also required for selective ubiquitin-mediated degradation of defective nascent chain polypeptides by the proteasome. Also involved in endoplasmic reticulum stress-induced pre-emptive quality control, a mechanism that selectively attenuates the translocation of newly synthesized proteins into the endoplasmic reticulum and reroutes them to the cytosol for proteasomal degradation. May ensure the proper degradation of these proteins and thereby protects the endoplasmic reticulum from protein overload upon stress. By stabilizing a large spectrum of proteins, may indirectly affect different biological processes including apoptosis. By controlling the steady-state expression of the IGF1R receptor, indirectly regulates the insulin-like growth factor receptor signaling pathway. In terms of biological role, when nuclear, may also act as a component of some chromatin regulator complex. This chain is Large proline-rich protein bag6, found in Xenopus tropicalis (Western clawed frog).